The primary structure comprises 217 residues: Probable GTP-binding protein EngB (217 aa).

The region spanning 33-217 (GPAEIAFAGR…RITIEQAVAR (185 aa)) is the EngB-type G domain. Residues 41–48 (GRSNVGKS), 68–72 (GRTQE), 95–98 (DMPG), 162–165 (TKTD), and 196–198 (TSS) contribute to the GTP site. Mg(2+) is bound by residues serine 48 and threonine 70.

This sequence belongs to the TRAFAC class TrmE-Era-EngA-EngB-Septin-like GTPase superfamily. EngB GTPase family. The cofactor is Mg(2+).

Its function is as follows. Necessary for normal cell division and for the maintenance of normal septation. The chain is Probable GTP-binding protein EngB from Sinorhizobium fredii (strain NBRC 101917 / NGR234).